A 488-amino-acid chain; its full sequence is Alkaline nuclease (488 aa).

Belongs to the herpesviridae alkaline nuclease family. As to quaternary structure, interacts with major DNA-binding protein; this interaction increases the nuclease processivity of the alkaline exonuclease.

The protein localises to the host nucleus. It localises to the host cytoplasm. Plays a role in processing non linear or branched viral DNA intermediates in order to promote the production of mature packaged unit-length linear progeny viral DNA molecules. Exhibits endonuclease and exonuclease activities and accepts both double-stranded and single-stranded DNA as substrate. Exonuclease digestion of DNA is in the 5'-&gt; 3' direction and the products are 5'-monophosphate nucleosides. Additionally, forms a recombinase with the major DNA-binding protein, which displays strand exchange activity. The protein is Alkaline nuclease (U70) of Homo sapiens (Human).